The chain runs to 136 residues: Small ribosomal subunit protein uS8c (136 aa).

It belongs to the universal ribosomal protein uS8 family. As to quaternary structure, part of the 30S ribosomal subunit.

It localises to the plastid. The protein localises to the chloroplast. One of the primary rRNA binding proteins, it binds directly to 16S rRNA central domain where it helps coordinate assembly of the platform of the 30S subunit. The sequence is that of Small ribosomal subunit protein uS8c (rps8) from Hordeum vulgare (Barley).